The chain runs to 341 residues: Anthranilate phosphoribosyltransferase (341 aa).

5-phospho-alpha-D-ribose 1-diphosphate contacts are provided by residues Gly82, 85–86 (GD), Thr90, 92–95 (NIST), 110–118 (KHGGRSVSS), and Ser122. Residue Gly82 coordinates anthranilate. Ser94 provides a ligand contact to Mg(2+). Residue Arg168 participates in anthranilate binding. Mg(2+) contacts are provided by Asp227 and Glu228.

It belongs to the anthranilate phosphoribosyltransferase family. Homodimer. Requires Mg(2+) as cofactor.

It carries out the reaction N-(5-phospho-beta-D-ribosyl)anthranilate + diphosphate = 5-phospho-alpha-D-ribose 1-diphosphate + anthranilate. The protein operates within amino-acid biosynthesis; L-tryptophan biosynthesis; L-tryptophan from chorismate: step 2/5. Functionally, catalyzes the transfer of the phosphoribosyl group of 5-phosphorylribose-1-pyrophosphate (PRPP) to anthranilate to yield N-(5'-phosphoribosyl)-anthranilate (PRA). This Nitrosomonas eutropha (strain DSM 101675 / C91 / Nm57) protein is Anthranilate phosphoribosyltransferase.